Reading from the N-terminus, the 339-residue chain is Glycerol-3-phosphate dehydrogenase [NAD(P)+] (339 aa).

NADPH contacts are provided by Ser15, Trp16, His36, and Lys110. Positions 110, 144, and 146 each coordinate sn-glycerol 3-phosphate. Ala148 contacts NADPH. Residues Lys199, Asp252, Ser262, Arg263, and Asn264 each contribute to the sn-glycerol 3-phosphate site. Lys199 acts as the Proton acceptor in catalysis. Position 263 (Arg263) interacts with NADPH. Positions 287 and 289 each coordinate NADPH.

Belongs to the NAD-dependent glycerol-3-phosphate dehydrogenase family.

It is found in the cytoplasm. The catalysed reaction is sn-glycerol 3-phosphate + NAD(+) = dihydroxyacetone phosphate + NADH + H(+). The enzyme catalyses sn-glycerol 3-phosphate + NADP(+) = dihydroxyacetone phosphate + NADPH + H(+). Its pathway is membrane lipid metabolism; glycerophospholipid metabolism. Functionally, catalyzes the reduction of the glycolytic intermediate dihydroxyacetone phosphate (DHAP) to sn-glycerol 3-phosphate (G3P), the key precursor for phospholipid synthesis. The protein is Glycerol-3-phosphate dehydrogenase [NAD(P)+] of Desulfotalea psychrophila (strain LSv54 / DSM 12343).